Consider the following 110-residue polypeptide: MEARAVGKYIRISPQKARLVADVVRGMGVDQAITTLRFMPKKGAVILQKVIESALANATQDDQADVDNLYVKVITIDGGPSLKRIRPRAMGRATGIIKRTSHITVVLDEN.

Belongs to the universal ribosomal protein uL22 family. In terms of assembly, part of the 50S ribosomal subunit.

This protein binds specifically to 23S rRNA; its binding is stimulated by other ribosomal proteins, e.g. L4, L17, and L20. It is important during the early stages of 50S assembly. It makes multiple contacts with different domains of the 23S rRNA in the assembled 50S subunit and ribosome. In terms of biological role, the globular domain of the protein is located near the polypeptide exit tunnel on the outside of the subunit, while an extended beta-hairpin is found that lines the wall of the exit tunnel in the center of the 70S ribosome. The chain is Large ribosomal subunit protein uL22 from Desulfotalea psychrophila (strain LSv54 / DSM 12343).